A 67-amino-acid chain; its full sequence is Kappa-conotoxin-like Em11.8 (67 aa).

The first 26 residues, 1–26, serve as a signal peptide directing secretion; sequence MMFRLTSVSCFLLVIACLNLFQVVLT. 4 cysteine pairs are disulfide-bonded: Cys29–Cys43, Cys36–Cys48, Cys42–Cys51, and Cys47–Cys55. Phe59 carries the post-translational modification Phenylalanine amide. Positions 63 to 67 are excised as a propeptide; the sequence is ATFQE.

The protein belongs to the conotoxin I2 superfamily. As to expression, expressed by the venom duct.

It localises to the secreted. Inhibits the vertebrate voltage-gated potassium channels Kv1.1/KCNA1 and Kv1.3/KCNA3. This is Kappa-conotoxin-like Em11.8 from Conus emaciatus (False virgin cone).